We begin with the raw amino-acid sequence, 332 residues long: Abl interactor homolog (332 aa).

Residues 73 to 104 (HITSLLQLQTNEMEKLNIEIQTLTQRVRMIHD) are a coiled coil. The disordered stretch occupies residues 152-332 (SDINQNGVPP…NDFPPPPPPM (181 aa)). Over residues 164-206 (NHSNSSANLTSSSGHLAASSTSNSSTPSYQSPSYSSQPTISSG) the composition is skewed to low complexity. A compositionally biased stretch (pro residues) spans 221 to 247 (APPPPSLSVPAAPPPPVMNVPPPPPTS). Residues 248 to 257 (QRPSSVNNNA) are compositionally biased toward polar residues. The segment covering 277–314 (LPPPPSFGLPPPPTLGDDFPPPPPPPVGSYDFPPPPAR) has biased composition (pro residues).

Belongs to the ABI family. In terms of assembly, part of a Scar/WAVE complex containing brk1, scrA, abiA, pirA and napA. Interacts with scrA.

In terms of biological role, involved in regulation of actin and microtubule organization. Required for proper cytokinesis. The protein is Abl interactor homolog (abiA) of Dictyostelium discoideum (Social amoeba).